Consider the following 134-residue polypeptide: Mini-ribonuclease 3 (134 aa).

D22 is a catalytic residue.

It belongs to the MrnC RNase family. As to quaternary structure, homodimer. Mg(2+) is required as a cofactor.

The protein resides in the cytoplasm. In terms of biological role, involved in correct processing of both the 5' and 3' ends of 23S rRNA precursor. Processes 30S rRNA precursor transcript even in absence of ribonuclease 3 (Rnc); Rnc processes 30S rRNA into smaller rRNA precursors. The polypeptide is Mini-ribonuclease 3 (Staphylococcus aureus (strain NCTC 8325 / PS 47)).